Consider the following 151-residue polypeptide: MSEIITSLQTELSNRHANMVSEAVLAFSEHHDSALHSYFLNARVKDVILESLRTTEEKLRALDKLQLDASKNLSNLLVEYNSINAELESVNSKISSISSQEYALEEFQALSQNFEKNLVQHRRNSQNKLKCAMEKLKMIETSTHKAILDNF.

Positions Glu-56–Glu-140 form a coiled coil.

In terms of assembly, component of linear elements (LinEs), which are similar to synaptonemal complexes, at least composed of rec27, rec25, rec10 and mug20. Interacts with rec10.

The protein resides in the cytoplasm. The protein localises to the nucleus. It localises to the chromosome. Functionally, during meiotic DNA recombination, binds to and may help activate DNA double-strand break (DSB) hotspot sites. The sequence is that of Linear element protein Mug20 from Schizosaccharomyces pombe (strain 972 / ATCC 24843) (Fission yeast).